A 1180-amino-acid polypeptide reads, in one-letter code: Nonsense-mediated mRNA decay factor SMG7 (1180 aa).

TPR repeat units lie at residues 151–184 (QHCLVHLGDIARYRNQTSQAESYYRHAAQLVPSN) and 186–218 (QPYNQLAILASSKGDHLTTIFYYCRSIAVKFPF). Disordered regions lie at residues 496–636 (PQEK…TQTT), 692–795 (QTAS…SYMQ), 893–913 (CSDQENMPRGPPYEDNKSSPL), 1019–1127 (SLFE…WAAQ), and 1148–1180 (SSMMQPGPSALEQLLMQQKQKQQRGHGNMNPPH). The segment covering 504–520 (LQESSNGEQTPNESTHG) has biased composition (polar residues). 3 stretches are compositionally biased toward basic and acidic residues: residues 547–559 (ENIKPREQSREQN), 584–606 (NEQKKEGKRKSEVKKNSHDKTTD), and 615–627 (TELRKTPVSEARK). A compositionally biased stretch (polar residues) spans 692-718 (QTASHPQSANPVQTGKPSHIPYSQQRP). Residues 728–740 (PPQPQQTQPPPPQ) show a composition bias toward pro residues. Residues 741–778 (TSQQALQQSVQLQLQQQQQQQQQQQQQQQQSPTKQSSQ) are compositionally biased toward low complexity. Over residues 1026-1038 (WSPSLPASSDHST) the composition is skewed to polar residues. Positions 1039 to 1065 (PASQSPHSSNPSSLPSSPPTHSHGSMP) are enriched in low complexity. The span at 1076-1090 (DSRDRRANDRWKAEK) shows a compositional bias: basic and acidic residues. Positions 1103 to 1125 (SASTSSVPETNSWHQGAPTSTWA) are enriched in polar residues.

The protein localises to the cytoplasm. It localises to the nucleus. In terms of biological role, plays a role in nonsense-mediated mRNA decay. Recruits UPF1 to cytoplasmic mRNA decay bodies. Together with SMG5 is thought to provide a link to the mRNA degradation machinery involving exonucleolytic pathways, and to serve as an adapter for UPF1 to protein phosphatase 2A (PP2A), thereby triggering UPF1 dephosphorylation. Required for normal embryonic development. This is Nonsense-mediated mRNA decay factor SMG7 from Danio rerio (Zebrafish).